The primary structure comprises 105 residues: ATPase inhibitor A, mitochondrial (105 aa).

Residues 17-52 form a disordered region; it reads MSSDQLGELGTGAGKGGGGGGSVRAAGGSFGRREAA. The interval 22–51 is N-terminal inhibitory region; it reads LGELGTGAGKGGGGGGSVRAAGGSFGRREA. Positions 25-38 are enriched in gly residues; that stretch reads LGTGAGKGGGGGGS. Positions 58–105 form a coiled coil; that stretch reads FRQKEREQLAALKNHHEEEIDHHKKEIERLQREIDRHKGKIRKLKHDD. An antiparallel alpha-helical coiled coil region region spans residues 73-105; the sequence is HEEEIDHHKKEIERLQREIDRHKGKIRKLKHDD.

This sequence belongs to the ATPase inhibitor family. Homodimer; represents the active form and is present at a pH value below 6.5. Homotetramer; represents the inactive form and is present at a pH value above 7.0.

The protein resides in the mitochondrion. Functionally, endogenous F(1)F(o)-ATPase inhibitor limiting ATP depletion when the mitochondrial membrane potential falls below a threshold and the F(1)F(o)-ATP synthase starts hydrolyzing ATP to pump protons out of the mitochondrial matrix. Required to avoid the consumption of cellular ATP when the F(1)F(o)-ATP synthase enzyme acts as an ATP hydrolase. Indirectly acts as a regulator of heme synthesis in erythroid tissues: regulates heme synthesis by modulating the mitochondrial pH and redox potential, allowing fech to efficiently catalyze the incorporation of iron into protoporphyrin IX to produce heme. This chain is ATPase inhibitor A, mitochondrial, found in Danio rerio (Zebrafish).